The primary structure comprises 256 residues: Ribosomal RNA small subunit methyltransferase A (256 aa).

Residues Asn12, Leu14, Gly39, Glu60, Asp85, and Asn103 each coordinate S-adenosyl-L-methionine.

The protein belongs to the class I-like SAM-binding methyltransferase superfamily. rRNA adenine N(6)-methyltransferase family. RsmA subfamily.

It is found in the cytoplasm. It carries out the reaction adenosine(1518)/adenosine(1519) in 16S rRNA + 4 S-adenosyl-L-methionine = N(6)-dimethyladenosine(1518)/N(6)-dimethyladenosine(1519) in 16S rRNA + 4 S-adenosyl-L-homocysteine + 4 H(+). Specifically dimethylates two adjacent adenosines (A1518 and A1519) in the loop of a conserved hairpin near the 3'-end of 16S rRNA in the 30S particle. May play a critical role in biogenesis of 30S subunits. This chain is Ribosomal RNA small subunit methyltransferase A, found in Legionella pneumophila subsp. pneumophila (strain Philadelphia 1 / ATCC 33152 / DSM 7513).